The following is a 210-amino-acid chain: Uracil phosphoribosyltransferase (210 aa).

5-phospho-alpha-D-ribose 1-diphosphate-binding positions include R78, R103, and 130 to 138; that span reads DPMLATGGT. Residues I193 and 198–200 contribute to the uracil site; that span reads GDA. Position 199 (D199) interacts with 5-phospho-alpha-D-ribose 1-diphosphate.

It belongs to the UPRTase family. Requires Mg(2+) as cofactor.

It carries out the reaction UMP + diphosphate = 5-phospho-alpha-D-ribose 1-diphosphate + uracil. The protein operates within pyrimidine metabolism; UMP biosynthesis via salvage pathway; UMP from uracil: step 1/1. With respect to regulation, allosterically activated by GTP. Catalyzes the conversion of uracil and 5-phospho-alpha-D-ribose 1-diphosphate (PRPP) to UMP and diphosphate. This Xanthomonas campestris pv. campestris (strain 8004) protein is Uracil phosphoribosyltransferase.